Consider the following 315-residue polypeptide: MNQLDALREMTVVVADTGDIEAIRQYQPQDATTNPSLILSASALSQYAPLIDDAIRYAKSKSGNKAQQLVDAEDKLAVNIGLEILKIVPGRISTEVDARFSYDTEKTIAKARKLIGLYNEAGVANNRILIKIAATWQGIRAAEILEKEGINCNLTLLFSQAQARACAEAGVYLISPFVGRILDWYKANEKKEYAAAEDPGVISVTAIYNYYKQYNYKTIVMGASFRNVGEITEIAGCDRLTIAPPLLKALAESNETLVRKLDYQGEILDRPAPLSEAEFYWQHNQDPMAVDKLAEGIRKFAIDQEKLEEMLSAKL.

Lysine 131 serves as the catalytic Schiff-base intermediate with substrate.

The protein belongs to the transaldolase family. Type 1 subfamily. Homodimer.

It localises to the cytoplasm. The catalysed reaction is D-sedoheptulose 7-phosphate + D-glyceraldehyde 3-phosphate = D-erythrose 4-phosphate + beta-D-fructose 6-phosphate. It participates in carbohydrate degradation; pentose phosphate pathway; D-glyceraldehyde 3-phosphate and beta-D-fructose 6-phosphate from D-ribose 5-phosphate and D-xylulose 5-phosphate (non-oxidative stage): step 2/3. Transaldolase is important for the balance of metabolites in the pentose-phosphate pathway. The chain is Transaldolase from Haemophilus ducreyi (strain 35000HP / ATCC 700724).